Reading from the N-terminus, the 279-residue chain is Putative pyruvate, phosphate dikinase regulatory protein (279 aa).

152-159 (GVSRTSKS) provides a ligand contact to ADP.

Belongs to the pyruvate, phosphate/water dikinase regulatory protein family. PDRP subfamily.

It carries out the reaction N(tele)-phospho-L-histidyl/L-threonyl-[pyruvate, phosphate dikinase] + ADP = N(tele)-phospho-L-histidyl/O-phospho-L-threonyl-[pyruvate, phosphate dikinase] + AMP + H(+). The enzyme catalyses N(tele)-phospho-L-histidyl/O-phospho-L-threonyl-[pyruvate, phosphate dikinase] + phosphate + H(+) = N(tele)-phospho-L-histidyl/L-threonyl-[pyruvate, phosphate dikinase] + diphosphate. Its function is as follows. Bifunctional serine/threonine kinase and phosphorylase involved in the regulation of the pyruvate, phosphate dikinase (PPDK) by catalyzing its phosphorylation/dephosphorylation. In Anaplasma marginale (strain St. Maries), this protein is Putative pyruvate, phosphate dikinase regulatory protein.